The following is a 325-amino-acid chain: MARGGRLGLALGLLLALVLALRAKPTVRKERVVRPDSELGERPPEDNQSFQYDHEAFLGKEDSKTFDQLSPDESKERLGKIVDRIDSDGDGLVTTEELKLWIKRVQKRYIYDNVAKVWKDYDRDKDEKISWEEYKQATYGYYLGNPAEFHDSSDHHTFKKMLPRDERRFKASDLDGDLTATREEFTAFLHPEEFEHMKEIVVLETLEDIDKNGDGFVDQDEYIADMFSHEDNGPEPDWVLSEREQFNDFRDLNKDGKLDKDEIRHWILPQDYDHAQAEARHLVYESDKNKDEMLTKEEILDNWNMFVGSQATNYGEDLTKNHDEL.

The first 23 residues, 1–23, serve as a signal peptide directing secretion; the sequence is MARGGRLGLALGLLLALVLALRA. The N-linked (GlcNAc...) asparagine; partial glycan is linked to asparagine 47. Residues serine 49 and serine 74 each carry the phosphoserine modification. EF-hand domains lie at 73–108, 109–144, 160–195, 197–232, 238–273, and 274–309; these read ESKERLGKIVDRIDSDGDGLVTTEELKLWIKRVQKR, YIYDNVAKVWKDYDRDKDEKISWEEYKQATYGYYLG, KMLPRDERRFKASDLDGDLTATREEFTAFLHPEEFE, MKEIVVLETLEDIDKNGDGFVDQDEYIADMFSHEDN, WVLSEREQFNDFRDLNKDGKLDKDEIRHWILPQDYD, and HAQAEARHLVYESDKNKDEMLTKEEILDNWNMFVGS. Ca(2+)-binding residues include aspartate 86, aspartate 88, aspartate 90, glutamate 97, aspartate 122, aspartate 124, aspartate 126, lysine 128, glutamate 133, aspartate 173, aspartate 175, aspartate 177, threonine 179, glutamate 184, aspartate 210, asparagine 212, aspartate 214, glutamate 221, aspartate 251, asparagine 253, aspartate 255, lysine 257, glutamate 262, aspartate 287, asparagine 289, aspartate 291, methionine 293, and glutamate 298. Positions 322–325 match the Prevents secretion from ER motif; sequence HDEL.

It belongs to the CREC family. O-glycosylated. O-mannosylated by POMT1 and POMT2 and elongated by POMGNT1.

Its subcellular location is the endoplasmic reticulum lumen. Functionally, may regulate calcium-dependent activities in the endoplasmic reticulum lumen or post-ER compartment. This Mus musculus (Mouse) protein is Reticulocalbin-1 (Rcn1).